The primary structure comprises 180 residues: PRA1 family protein F1 (180 aa).

Transmembrane regions (helical) follow at residues 63-83 (ANTV…VFLS), 84-104 (LIWN…WLFL), 123-143 (IVLI…DAKL), and 145-165 (IAVA…VRKT).

It belongs to the PRA1 family. In terms of assembly, interacts with PRA1F2. In terms of tissue distribution, expressed in hypocotyls, leaf bases and shoot apex.

The protein localises to the endosome membrane. In terms of biological role, may be involved in both secretory and endocytic intracellular trafficking in the endosomal/prevacuolar compartments. This chain is PRA1 family protein F1 (PRA1F1), found in Arabidopsis thaliana (Mouse-ear cress).